Here is a 234-residue protein sequence, read N- to C-terminus: MAKKVFKRLEKLFSKIQNDKAYGVEQGVEVVKSLASAKFDETVEVALRLGVDPRHADQMVRGAVVLPHGTGKKVRVAVFAKDIKQDEAKNAGADVVGGDDLAEEIKNGRIDFDMVIATPDMMAVVGKVGRILGPKGLMPNPKTGTVTMDIAKAVSNAKSGQVNFRVDKKGNVHAPIGKASFPEEKIKENMLELVKTINRLKPSSAKGKYIRNATLSLTMSPSVNLDAQELMDIK.

This sequence belongs to the universal ribosomal protein uL1 family. As to quaternary structure, part of the 50S ribosomal subunit.

Binds directly to 23S rRNA. The L1 stalk is quite mobile in the ribosome, and is involved in E site tRNA release. Functionally, protein L1 is also a translational repressor protein, it controls the translation of the L11 operon by binding to its mRNA. This Helicobacter pylori (strain Shi470) protein is Large ribosomal subunit protein uL1.